The primary structure comprises 957 residues: Collagen alpha-1(XXI) chain (957 aa).

The N-terminal stretch at 1–22 is a signal peptide; sequence MAHYITFLCMVLVLLLQNSVLA. Residues 37-211 form the VWFA domain; the sequence is DLVFILDGSY…KIREVMKQKL (175 aa). Residue Asn-62 is glycosylated (N-linked (GlcNAc...) asparagine). The Laminin G-like domain maps to 230–412; that stretch reads GFDILLGLDV…VQKLRIYCDP (183 aa). Collagen-like domains follow at residues 448–500, 501–542, and 543–594; these read PGKP…GARG, LPGY…GDKG, and SPGF…SPGA. 2 disordered regions span residues 448–786 and 825–938; these read PGKP…KPGR and GSPG…ICDP. 2 stretches are compositionally biased toward low complexity: residues 451-462 and 471-481; these read PGLQGPKGDPGL and QPGQDGKPGYQ. Basic and acidic residues predominate over residues 507-517; it reads EPGRDGDKGDR. Low complexity-rich tracts occupy residues 618 to 637 and 705 to 729; these read QKGE…PGMP and EKGI…IQGH. Collagen-like domains are found at residues 681 to 733, 734 to 787, 825 to 882, and 884 to 934; these read SPGE…HGAK, GERG…PGRE, GSPG…GSQG, and GYPG…GPPG. Residues 732 to 742 are compositionally biased toward basic and acidic residues; sequence AKGERGEKGEP. Over residues 829-838 the composition is skewed to pro residues; that stretch reads IPGPPGPIGP. The span at 839 to 874 shows a compositional bias: low complexity; the sequence is EGPRGLPGLPGRDGVPGLVGVPGRPGVRGLKGLPGR. The span at 889–900 shows a compositional bias: pro residues; that stretch reads QGPPGPPGPEGP.

The protein belongs to the fibril-associated collagens with interrupted helices (FACIT) family. As to expression, highly expressed in lymph node, jejunum, pancreas, stomach, trachea, testis, uterus and placenta; moderately expressed in brain, colon, lung, prostate, spinal cord, salivary gland and vascular smooth-muscle cells and very weakly expressed in heart, liver, kidney, bone marrow, spleen, thymus, skeletal muscle, adrenal gland and peripheral leukocytes. Expression in heart was higher in the right ventricle and atrium than in the left ventricle and atrium.

Its subcellular location is the secreted. The protein localises to the extracellular space. It localises to the extracellular matrix. It is found in the cytoplasm. The protein is Collagen alpha-1(XXI) chain (COL21A1) of Homo sapiens (Human).